The sequence spans 255 residues: Probable transcriptional regulatory protein CMM_1817 (255 aa).

Belongs to the TACO1 family.

It is found in the cytoplasm. The polypeptide is Probable transcriptional regulatory protein CMM_1817 (Clavibacter michiganensis subsp. michiganensis (strain NCPPB 382)).